The chain runs to 568 residues: Protein downstream neighbor of son homolog (568 aa).

2 disordered regions span residues 28–48 (NKLA…QVDE) and 311–355 (MPLK…DDDE). Residues 315 to 335 (SDNSGNAHDNSFNEESTTTSL) are compositionally biased toward polar residues.

Belongs to the DONSON family. Expression peaks during late G1 and S phase (at protein level).

The protein resides in the nucleus. In terms of biological role, essential for DNA amplification in the ovary and required for cell proliferation during development. This Drosophila melanogaster (Fruit fly) protein is Protein downstream neighbor of son homolog (hd).